A 191-amino-acid chain; its full sequence is Prostaglandin-H2 D-isomerase (191 aa).

Positions 1–24 (MAALHTLWMGLVLLGVLGVLQTRA) are cleaved as a signal peptide. At Gln25 the chain carries Pyrrolidone carboxylic acid. An N-linked (GlcNAc...) asparagine glycan is attached at Asn51. Catalysis depends on Cys65, which acts as the Nucleophile. Asn78 is a glycosylation site (N-linked (GlcNAc...) asparagine). Cys89 and Cys186 are disulfide-bonded.

This sequence belongs to the calycin superfamily. Lipocalin family. Monomer. Post-translationally, N- and O-glycosylated. Both N-glycosylation recognition sites are almost quantitatively occupied by N-glycans of the biantennary complex type, with a considerable proportion of structures bearing a bisecting GlcNAc. N-glycan at Asn-78: dHex1Hex5HexNAc4. Agalacto structure as well as sialylated and nonsialylated oligosaccharides bearing alpha2-3- and/or alpha2-6-linked NeuNAc are present.

The protein resides in the rough endoplasmic reticulum. It localises to the nucleus membrane. Its subcellular location is the golgi apparatus. The protein localises to the cytoplasm. It is found in the perinuclear region. The protein resides in the secreted. It carries out the reaction prostaglandin H2 = prostaglandin D2. Its function is as follows. Catalyzes the conversion of PGH2 to PGD2, a prostaglandin involved in smooth muscle contraction/relaxation and a potent inhibitor of platelet aggregation. Involved in a variety of CNS functions, such as sedation, NREM sleep and PGE2-induced allodynia, and may have an anti-apoptotic role in oligodendrocytes. Binds small non-substrate lipophilic molecules, including biliverdin, bilirubin, retinal, retinoic acid and thyroid hormone, and may act as a scavenger for harmful hydrophobic molecules and as a secretory retinoid and thyroid hormone transporter. Possibly involved in development and maintenance of the blood-brain, blood-retina, blood-aqueous humor and blood-testis barrier. It is likely to play important roles in both maturation and maintenance of the central nervous system and male reproductive system. Involved in PLA2G3-dependent maturation of mast cells. PLA2G3 is secreted by immature mast cells and acts on nearby fibroblasts upstream to PTDGS to synthesize PGD2, which in turn promotes mast cell maturation and degranulation via PTGDR. This Felis catus (Cat) protein is Prostaglandin-H2 D-isomerase (PTGDS).